Consider the following 403-residue polypeptide: MVYQPASGARDLLPLDVEKKRWIEDRLQQVFHRWGYHRIITSTLERMDTLMAGEAIQRQMVIQLQNGEDDELGLRPELTASIARTVVTRMANATYPQRLYYNANVFRRTWESRHNRQQEFYQAGVELLGAGGLLANAEVLLLVADCLAALGLRQWHLILGEAGITRSLLSAFPANLQDKVRSAIAHLDRITIDTLPLSDKLRDRAQIIMDLRGPSADVLQKVSSLDLDEEQREAVNNLKSLVELLESEKKFPLILDLSLIQTIDYYTGIVFEVVNDTESQARVLGRGGRYDQLLGLYHPQRENIPGIGFGLSIEDLYQVLLSTQQLPQVTPASNYLVVPETGSANAAAFAYAQKLRDSTDLVRVEIDLGGRDAEAIRQYARDRSIAQIAWIKADSSPKIESLR.

This sequence belongs to the class-II aminoacyl-tRNA synthetase family. HisZ subfamily. In terms of assembly, heteromultimer composed of HisG and HisZ subunits.

The protein localises to the cytoplasm. It participates in amino-acid biosynthesis; L-histidine biosynthesis; L-histidine from 5-phospho-alpha-D-ribose 1-diphosphate: step 1/9. In terms of biological role, required for the first step of histidine biosynthesis. May allow the feedback regulation of ATP phosphoribosyltransferase activity by histidine. In Nostoc punctiforme (strain ATCC 29133 / PCC 73102), this protein is ATP phosphoribosyltransferase regulatory subunit.